Reading from the N-terminus, the 386-residue chain is Circumsporozoite protein (386 aa).

A signal peptide spans 1–22; the sequence is MKNFILLAVSSILLVDLFPTHC. Positions 51-304 are disordered; it reads HVGQSASRGR…NEGANAPNEK (254 aa). A compositionally biased stretch (basic and acidic residues) spans 72 to 100; that stretch reads DAKKKKDGKKAEPKNPRENKLKQPGDRAD. The interval 80–88 is required for the binding to heparan sulfate proteoglycans (HSPGs) on the surface of host hepatocytes; sequence KKAEPKNPR. The tract at residues 91–95 is region I; contains the proteolytic cleavage site; the sequence is KLKQP. 20 consecutive repeat copies span residues 96 to 104, 105 to 113, 114 to 122, 123 to 131, 132 to 140, 141 to 149, 150 to 158, 159 to 167, 168 to 176, 177 to 185, 186 to 194, 195 to 203, 204 to 212, 213 to 221, 222 to 230, 231 to 239, 240 to 248, 249 to 257, 258 to 266, and 267 to 275. The segment at 96 to 275 is 20 X 9 AA tandem repeats of G-D-R-A-[AD]-G-Q-P-A; the sequence is GDRADGQPAG…AGDRAAGQPA (180 aa). The segment covering 275–292 has biased composition (gly residues); it reads AGNGAGGQAAGGNAGGQG. Positions 293 to 303 are enriched in low complexity; that stretch reads QNNEGANAPNE. The TSP type-1 domain maps to 312-364; sequence KVRATVGTEWTPCSVTCGVGVRVRRRVNAANKKPEDLTLNDLETDVCTMDKCA. Cystine bridges form between Cys324–Cys358 and Cys328–Cys363. A glycan (O-linked (Fuc) threonine) is linked at Thr327. Cys363 carries GPI-anchor amidated cysteine lipidation. Positions 364–386 are cleaved as a propeptide — removed in mature form; that stretch reads AGIFNVVSNSLGLVILLVLALFN.

This sequence belongs to the plasmodium circumsporozoite protein family. In terms of processing, during host cell invasion, proteolytically cleaved at the cell membrane in the region I by a papain-like cysteine protease of parasite origin. Cleavage is triggered by the sporozoite contact with highly sulfated heparan sulfate proteoglycans (HSPGs) present on the host hepatocyte cell surface. Cleavage exposes the TSP type-1 (TSR) domain and is required for productive invasion of host hepatocytes but not for adhesion to the host cell membrane. Cleavage is dispensable for sporozoite development in the oocyst, motility and for traversal of host and vector cells. O-glycosylated; maybe by POFUT2.

The protein localises to the cell membrane. Its subcellular location is the cytoplasm. In terms of biological role, essential sporozoite protein. In the mosquito vector, required for sporozoite development in the oocyst, migration through the vector hemolymph and entry into the vector salivary glands. In the vertebrate host, required for sporozoite migration through the host dermis and infection of host hepatocytes. Binds to highly sulfated heparan sulfate proteoglycans (HSPGs) on the surface of host hepatocytes. In the vertebrate host, binds to highly sulfated heparan sulfate proteoglycans (HSPGs) on the surface of host hepatocytes and is required for sporozoite invasion of the host hepatocytes. The sequence is that of Circumsporozoite protein from Plasmodium simium.